Here is a 630-residue protein sequence, read N- to C-terminus: Golgi apyrase (630 aa).

The Lumenal segment spans residues 1-500 (MLIENTNDRF…RKQSSSLSNK (500 aa)). The active-site Proton acceptor is Glu-152. Residues 501 to 517 (GFLMWFAIICCIFYLIF) traverse the membrane as a helical segment. The Cytoplasmic segment spans residues 518–630 (HRSHIIRRRF…SKFKDSRLYD (113 aa)). Residues 586–606 (SSATMQREHEPQRTASQSANL) are disordered.

It belongs to the GDA1/CD39 NTPase family. Interacts with activator subunit VMA13 of vacuolar H(+)-ATPase. Interacts with CDC55; this interaction is disrupted by adenovirus E4orf4, which remains associated with both YND1 and CDC55. Ca(2+) serves as cofactor. Mg(2+) is required as a cofactor. The cofactor is Mn(2+).

It is found in the golgi apparatus. The protein localises to the membrane. The catalysed reaction is a ribonucleoside 5'-triphosphate + 2 H2O = a ribonucleoside 5'-phosphate + 2 phosphate + 2 H(+). Its pathway is protein modification; protein glycosylation. With respect to regulation, activity is inhibited both by interaction with VMA13 and by V-ATPase acidification of the lumen. The activity of VMA13 is not required for YND1 inhibition. Catalyzes the hydrolysis of phosphoanhydride bonds of nucleoside tri- and di-phosphates. Has equal high activity toward ADP/ATP, GDP/GTP, and UDP/UTP and approximately 50% less toward CDP/CTP and thiamine pyrophosphate. Has no activity toward GMP. Required for Golgi glycosylation and cell wall integrity. Together with CDC55, required for adenovirus E4orf4 (early region 4 open reading frame 4) induced toxicity, the apyrase activity is not required for this function. Plays a role in sphingolipid synthesis. In Saccharomyces cerevisiae (strain ATCC 204508 / S288c) (Baker's yeast), this protein is Golgi apyrase (YND1).